The chain runs to 877 residues: Leucine--tRNA ligase (877 aa).

The 'HIGH' region motif lies at 43 to 53; the sequence is PYPSGRIHMGH. The 'KMSKS' region motif lies at 628–632; the sequence is KMSKS. Lys-631 contributes to the ATP binding site.

Belongs to the class-I aminoacyl-tRNA synthetase family.

The protein localises to the cytoplasm. It carries out the reaction tRNA(Leu) + L-leucine + ATP = L-leucyl-tRNA(Leu) + AMP + diphosphate. The polypeptide is Leucine--tRNA ligase (Brucella suis biovar 1 (strain 1330)).